The sequence spans 241 residues: 1-(5-phosphoribosyl)-5-[(5-phosphoribosylamino)methylideneamino] imidazole-4-carboxamide isomerase (241 aa).

Asp-8 functions as the Proton acceptor in the catalytic mechanism. Asp-129 acts as the Proton donor in catalysis.

Belongs to the HisA/HisF family.

It is found in the cytoplasm. It catalyses the reaction 1-(5-phospho-beta-D-ribosyl)-5-[(5-phospho-beta-D-ribosylamino)methylideneamino]imidazole-4-carboxamide = 5-[(5-phospho-1-deoxy-D-ribulos-1-ylimino)methylamino]-1-(5-phospho-beta-D-ribosyl)imidazole-4-carboxamide. It participates in amino-acid biosynthesis; L-histidine biosynthesis; L-histidine from 5-phospho-alpha-D-ribose 1-diphosphate: step 4/9. This chain is 1-(5-phosphoribosyl)-5-[(5-phosphoribosylamino)methylideneamino] imidazole-4-carboxamide isomerase, found in Chloroflexus aurantiacus (strain ATCC 29364 / DSM 637 / Y-400-fl).